A 230-amino-acid polypeptide reads, in one-letter code: Zein-alpha 19A2 (230 aa).

The first 18 residues, 1-18, serve as a signal peptide directing secretion; the sequence is KIFCFLMLLGLSASAATA.

It belongs to the zein family.

Zeins are major seed storage proteins. In Zea mays (Maize), this protein is Zein-alpha 19A2.